Reading from the N-terminus, the 310-residue chain is Probable manganese-dependent inorganic pyrophosphatase (310 aa).

Residues His-9, Asp-13, Asp-15, Asp-76, His-98, and Asp-150 each contribute to the Mn(2+) site.

Belongs to the PPase class C family. Homodimer. Requires Mn(2+) as cofactor.

The protein localises to the cytoplasm. It carries out the reaction diphosphate + H2O = 2 phosphate + H(+). The protein is Probable manganese-dependent inorganic pyrophosphatase (ppaC) of Streptococcus mutans serotype c (strain ATCC 700610 / UA159).